The primary structure comprises 260 residues: Neuraminyllactose-binding hemagglutinin (260 aa).

An N-terminal signal peptide occupies residues 1–27 (MKTNGHFKDFAWKKCFLGASVVALLVG). Cys-28 carries N-palmitoyl cysteine lipidation. Cys-28 carries S-diacylglycerol cysteine lipidation.

Its subcellular location is the cell outer membrane. In Helicobacter pylori (strain J99 / ATCC 700824) (Campylobacter pylori J99), this protein is Neuraminyllactose-binding hemagglutinin (hpaA).